The primary structure comprises 53 residues: Small, acid-soluble spore protein O (53 aa).

The interval 1–53 (MVRKKANHSRPGMNAAKAQGKDAGLTSQFHAEIGQEPLNQAQRQNNKKRKKNQ) is disordered.

It belongs to the SspO family.

Its subcellular location is the spore core. This Halalkalibacterium halodurans (strain ATCC BAA-125 / DSM 18197 / FERM 7344 / JCM 9153 / C-125) (Bacillus halodurans) protein is Small, acid-soluble spore protein O.